Here is a 135-residue protein sequence, read N- to C-terminus: UPF0355 protein SH2586 (135 aa).

Residues 105–135 are disordered; the sequence is NSSHDEVEENNSAYEEIDITHYANESKGPKS.

It belongs to the UPF0355 family.

In Staphylococcus haemolyticus (strain JCSC1435), this protein is UPF0355 protein SH2586.